The sequence spans 424 residues: Imidazolonepropionase (424 aa).

Residues H84 and H86 each coordinate Fe(3+). Residues H84 and H86 each coordinate Zn(2+). Residues R93, Y156, and H189 each contribute to the 4-imidazolone-5-propanoate site. Y156 is an N-formimidoyl-L-glutamate binding site. Residue H254 participates in Fe(3+) binding. H254 serves as a coordination point for Zn(2+). 4-imidazolone-5-propanoate is bound at residue E257. D328 contributes to the Fe(3+) binding site. D328 contacts Zn(2+). 2 residues coordinate N-formimidoyl-L-glutamate: N330 and G332. S333 provides a ligand contact to 4-imidazolone-5-propanoate.

This sequence belongs to the metallo-dependent hydrolases superfamily. HutI family. The cofactor is Zn(2+). Fe(3+) is required as a cofactor.

It is found in the cytoplasm. The catalysed reaction is 4-imidazolone-5-propanoate + H2O = N-formimidoyl-L-glutamate. It participates in amino-acid degradation; L-histidine degradation into L-glutamate; N-formimidoyl-L-glutamate from L-histidine: step 3/3. Catalyzes the hydrolytic cleavage of the carbon-nitrogen bond in imidazolone-5-propanoate to yield N-formimidoyl-L-glutamate. It is the third step in the universal histidine degradation pathway. The chain is Imidazolonepropionase from Geobacillus kaustophilus (strain HTA426).